The sequence spans 374 residues: F-box/LRR-repeat protein 8 (374 aa).

The 47-residue stretch at 2–48 (AEPGEQLPEEVLALIFRHLPLPDRAAAARVCRAWAAAATCSAVWHDT) folds into the F-box domain.

Directly interacts with SKP1 and CUL1.

Its function is as follows. Substrate-recognition component of the SCF (SKP1-CUL1-F-box protein)-type E3 ubiquitin ligase complex. The chain is F-box/LRR-repeat protein 8 (FBXL8) from Bos taurus (Bovine).